The chain runs to 248 residues: MAPKAAKGAKPEPAPAPPPPGAKPEEDKKDGKEPSDKPQKAVQDHKEPSDKPQKAVQPKHEVGTRRGCRRYRWELKDSNKEFWLLGHAEIKIRSLGCLIAAMILLSSLTVHPILRLIITMEISFFSFFILLYSFAIHRYIPFILWPISDLFNDLIACAFLVGAVVFAVRSRRSMNLHYLLAVILIGAAGVFAFIDVCLQRNHFRGKKAKKHMLVPPPGKEKGPQQGKGPEPAKPPEPGKPPGPAKGKK.

The tract at residues 1–63 (MAPKAAKGAK…KAVQPKHEVG (63 aa)) is disordered. Positions 12–22 (EPAPAPPPPGA) are enriched in pro residues. Residues 23–63 (KPEEDKKDGKEPSDKPQKAVQDHKEPSDKPQKAVQPKHEVG) show a composition bias toward basic and acidic residues. One can recognise an MARVEL domain in the interval 82 to 204 (FWLLGHAEIK…DVCLQRNHFR (123 aa)). Transmembrane regions (helical) follow at residues 116–136 (LIIT…SFAI), 147–167 (ISDL…VVFA), and 178–198 (YLLA…DVCL). The interval 208–248 (AKKHMLVPPPGKEKGPQQGKGPEPAKPPEPGKPPGPAKGKK) is disordered. Over residues 231-248 (PAKPPEPGKPPGPAKGKK) the composition is skewed to pro residues.

This sequence belongs to the chemokine-like factor family. Highly expressed in testis.

It is found in the membrane. The sequence is that of CKLF-like MARVEL transmembrane domain-containing protein 2 (CMTM2) from Homo sapiens (Human).